We begin with the raw amino-acid sequence, 443 residues long: ATP-dependent protease ATPase subunit HslU (443 aa).

ATP is bound by residues Val18 and 60–65; that span reads GVGKTE. A disordered region spans residues 139-160; the sequence is AKNNWGQPEESGEPSSARQNFR. ATP contacts are provided by Asp256, Glu321, and Arg393.

Belongs to the ClpX chaperone family. HslU subfamily. As to quaternary structure, a double ring-shaped homohexamer of HslV is capped on each side by a ring-shaped HslU homohexamer. The assembly of the HslU/HslV complex is dependent on binding of ATP.

It is found in the cytoplasm. ATPase subunit of a proteasome-like degradation complex; this subunit has chaperone activity. The binding of ATP and its subsequent hydrolysis by HslU are essential for unfolding of protein substrates subsequently hydrolyzed by HslV. HslU recognizes the N-terminal part of its protein substrates and unfolds these before they are guided to HslV for hydrolysis. This is ATP-dependent protease ATPase subunit HslU from Sodalis glossinidius (strain morsitans).